A 617-amino-acid chain; its full sequence is MKLKISLIAPILLLFSFFFAVESKCRTSCPLALASYYLENGTTLSVINQNLNSSIAPYDQINFDPILRYNSNIKDKDRIQMGSRVLVPFPCECQPGDFLGHNFSYSVRQEDTYERVAISNYANLTTMESLQARNPFPATNIPLSATLNVLVNCSCGDESVSKDFGLFVTYPLRPEDSLSSIARSSGVSADILQRYNPGVNFNSGNGIVYVPGRDPNGAFPPFKSSKQDGVGAGVIAGIVIGVIVALLLILFIVYYAYRKNKSKGDSFSSSIPLSTKADHASSTSLQSGGLGGAGVSPGIAAISVDKSVEFSLEELAKATDNFNLSFKIGQGGFGAVYYAELRGEKAAIKKMDMEASKQFLAELKVLTRVHHVNLVRLIGYCVEGSLFLVYEYVENGNLGQHLHGSGREPLPWTKRVQIALDSARGLEYIHEHTVPVYVHRDIKSANILIDQKFRAKVADFGLTKLTEVGGSATRGAMGTFGYMAPETVYGEVSAKVDVYAFGVVLYELISAKGAVVKMTEAVGEFRGLVGVFEESFKETDKEEALRKIIDPRLGDSYPFDSVYKMAELGKACTQENAQLRPSMRYIVVALSTLFSSTGNWDVGNFQNEDLVSLMSGR.

Residues 1–23 form the signal peptide; sequence MKLKISLIAPILLLFSFFFAVES. Residues 24 to 232 lie on the Extracellular side of the membrane; sequence KCRTSCPLAL…KSSKQDGVGA (209 aa). Intrachain disulfides connect Cys25–Cys93, Cys29–Cys155, and Cys91–Cys153. 3 N-linked (GlcNAc...) asparagine glycosylation sites follow: Asn40, Asn52, and Asn102. In terms of domain architecture, LysM 1; degenerate spans 46–74; it reads VINQNLNSSIAPYDQINFDPILRYNSNIK. Residues 108–140 enclose the LysM 2; degenerate domain; it reads RQEDTYERVAISNYANLTTMESLQARNPFPATN. A chitin-binding site is contributed by 109 to 115; it reads QEDTYER. N-linked (GlcNAc...) asparagine glycosylation is present at Asn123. Position 137 to 143 (137 to 143) interacts with chitin; sequence PATNIPL. The N-linked (GlcNAc...) asparagine glycan is linked to Asn152. Positions 168–211 constitute a LysM 3 domain; it reads VTYPLRPEDSLSSIARSSGVSADILQRYNPGVNFNSGNGIVYVP. The helical transmembrane segment at 233–253 threads the bilayer; the sequence is GVIAGIVIGVIVALLLILFIV. The Cytoplasmic portion of the chain corresponds to 254-617; sequence YYAYRKNKSK…EDLVSLMSGR (364 aa). Ser266, Ser268, and Ser274 each carry phosphoserine. The Protein kinase domain occupies 322-594; the sequence is FNLSFKIGQG…YIVVALSTLF (273 aa). ATP-binding positions include 328-336 and Lys349; that span reads IGQGGFGAV. Tyr390 is subject to Phosphotyrosine. Residue Asp441 is the Proton acceptor of the active site. 2 positions are modified to phosphothreonine: Thr479 and Thr519.

The protein belongs to the protein kinase superfamily. Ser/Thr protein kinase family. As to quaternary structure, forms homodimers and homooligomers. Homodimerization is required to trigger plant defenses. Binds to chitin, chitosan and chito-oligomer oligosaccharide elicitors. Interaction with chitin octamer (NAG(8)) promotes homodimerization while shorter chitin oligomers inhibit homodimerization. Interacts with Pseudomonas syringae hopAB2/avrPtoB. Interacts (preferentially when unphosphorylated) with PBL27 at the plasma membrane. Binds to IOS1. Post-translationally, autophosphorylated. Autophosphorylation is induced by chitin and derivatives. In terms of processing, ubiquitinated and targeted to the proteasome by hopAB2/avrPtoB of Pseudomonas syringae pv. tomato DC3000. In terms of tissue distribution, expressed ubiquitously, with lowest expression in pollen.

Its subcellular location is the cell membrane. The enzyme catalyses L-seryl-[protein] + ATP = O-phospho-L-seryl-[protein] + ADP + H(+). The catalysed reaction is L-threonyl-[protein] + ATP = O-phospho-L-threonyl-[protein] + ADP + H(+). With respect to regulation, activated by chitin-mediated homodimerization. Lysin motif (LysM) receptor kinase that functions as a cell surface receptor in chitin elicitor (chitooligosaccharides) signaling leading to innate immunity toward both biotic and abiotic stresses (e.g. tolerance to salinity, heavy-metal stresses, and Botrytis cinerea infection). Recognizes microbe-derived N-acetylglucosamine (NAG)-containing ligands. Involved in the resistance to pathogenic fungi Alternaria brassicicola and Erysiphe cichoracearum, probably by sensing microbe-associated molecular patterns (MAMP) and pathogen-associated molecular patterns (PAMP). Plays an essential role in detecting peptidoglycans (e.g. PGNs) and restricting bacterial growth. Target of the bacterial type III effector E3-ligase protein hopAB2/avrPtoB of Pseudomonas syringae pv. tomato DC3000 that mediates ubiquitination and subsequent proteolysis, thus blocking all defense responses by suppressing PAMP-triggered immunity (PTI). Mediates chitin-induced phosphorylation of PBL27. This chain is Chitin elicitor receptor kinase 1 (CERK1), found in Arabidopsis thaliana (Mouse-ear cress).